Consider the following 434-residue polypeptide: MSIITDVYAREVLDSRGNPTLEVEVYTESGAFGRGMVPSGASTGEHEAVELRDGDKSRYGGLGTQKAVDNVNNIIAEAIIGYDVRDQQAIDRAMIALDGTPNKGKLGANAILGVSIAVARAAADYLEIPLYSYLGGFNTKVLPTPMMNIINGGSHSDAPIAFQEFMILPVGAPTFKEALRYGAEIFHALKKILKSRGLETAVGDEGGFAPRFEGTEDGVETILAAIEAAGYVPGKDVFLGFDCASSEFYDKERKVYDYTKFEGEGAAVRTSAEQIDYLEELVNKYPIITIEDGMDENDWDGWKALTERLGKKVQLVGDDFFVTNTDYLARGIQEGAANSILIKVNQIGTLTETFEAIEMAKEAGYTAVVSHRSGETEDSTIADIAVATNAGQIKTGSLSRTDRIAKYNQLLRIEDQLGEVAEYRGLKSFYNLKK.

A (2R)-2-phosphoglycerate-binding site is contributed by Gln-163. The Proton donor role is filled by Glu-205. Asp-242, Glu-291, and Asp-318 together coordinate Mg(2+). 4 residues coordinate (2R)-2-phosphoglycerate: Lys-343, Arg-372, Ser-373, and Lys-394. Lys-343 serves as the catalytic Proton acceptor.

This sequence belongs to the enolase family. Mg(2+) is required as a cofactor.

It is found in the cytoplasm. Its subcellular location is the secreted. The protein localises to the cell surface. It localises to the cell wall. The enzyme catalyses (2R)-2-phosphoglycerate = phosphoenolpyruvate + H2O. It participates in carbohydrate degradation; glycolysis; pyruvate from D-glyceraldehyde 3-phosphate: step 4/5. Functionally, catalyzes the reversible conversion of 2-phosphoglycerate (2-PG) into phosphoenolpyruvate (PEP). It is essential for the degradation of carbohydrates via glycolysis. This is Enolase from Streptococcus pneumoniae serotype 2 (strain D39 / NCTC 7466).